Here is a 575-residue protein sequence, read N- to C-terminus: Phosphoenolpyruvate-protein phosphotransferase (575 aa).

The active-site Tele-phosphohistidine intermediate is H191. Phosphoenolpyruvate contacts are provided by R298 and R334. Mg(2+)-binding residues include E435 and D459. Phosphoenolpyruvate-binding positions include 458–459 (ND) and R469. The active-site Proton donor is C506.

Belongs to the PEP-utilizing enzyme family. As to quaternary structure, homodimer. Mg(2+) serves as cofactor.

The protein localises to the cytoplasm. It catalyses the reaction L-histidyl-[protein] + phosphoenolpyruvate = N(pros)-phospho-L-histidyl-[protein] + pyruvate. Functionally, general (non sugar-specific) component of the phosphoenolpyruvate-dependent sugar phosphotransferase system (sugar PTS). This major carbohydrate active-transport system catalyzes the phosphorylation of incoming sugar substrates concomitantly with their translocation across the cell membrane. Enzyme I transfers the phosphoryl group from phosphoenolpyruvate (PEP) to the phosphoryl carrier protein (HPr). This Lactococcus lactis subsp. lactis (strain IL1403) (Streptococcus lactis) protein is Phosphoenolpyruvate-protein phosphotransferase (ptsI).